Reading from the N-terminus, the 406-residue chain is Tyrosine-specific transport system 2 (406 aa).

Transmembrane regions (helical) follow at residues Phe-7–Leu-27, Leu-38–Val-58, Ile-83–Gly-103, Ala-119–Val-139, Val-150–Val-170, Ala-183–Ala-203, Ala-219–His-239, Val-279–Gly-299, Phe-314–Gly-334, Phe-335–Ile-355, and Asn-376–Ile-396.

Belongs to the amino acid/polyamine transporter 2 family. Mtr/TnaB/TyrP permease subfamily.

The protein resides in the cell inner membrane. The catalysed reaction is L-tyrosine(in) + H(+)(in) = L-tyrosine(out) + H(+)(out). Functionally, transports tyrosine across the cytoplasmic membrane. The transport system is energized by the proton motive force. In Haemophilus influenzae (strain ATCC 51907 / DSM 11121 / KW20 / Rd), this protein is Tyrosine-specific transport system 2 (tyrP-B).